Consider the following 612-residue polypeptide: UvrABC system protein C (612 aa).

Positions 20–98 (THSGVYRMLD…IKQHRPKYNI (79 aa)) constitute a GIY-YIG domain. The 36-residue stretch at 208 to 243 (SSVLEEISAKMYQASEDMEYEKAQVYRDQLVVLRKL) folds into the UVR domain.

This sequence belongs to the UvrC family. Interacts with UvrB in an incision complex.

The protein resides in the cytoplasm. The UvrABC repair system catalyzes the recognition and processing of DNA lesions. UvrC both incises the 5' and 3' sides of the lesion. The N-terminal half is responsible for the 3' incision and the C-terminal half is responsible for the 5' incision. The sequence is that of UvrABC system protein C from Francisella tularensis subsp. tularensis (strain WY96-3418).